A 387-amino-acid polypeptide reads, in one-letter code: DNA-damage-repair/toleration protein 111 (387 aa).

The interval 1 to 213 is disordered; it reads MLGGLYGDLP…TSGLGVGAGG (213 aa). Positions 19–29 are enriched in low complexity; it reads SGNSSSVWSSS. Basic and acidic residues predominate over residues 103-158; sequence DPARPNDYEEYKREKKRKATEAEMKREMDKRRQEDEERDKREREEREKERERDNSD. The G-patch domain occupies 214–260; that stretch reads QMTAAQRMMAKMGWKQGQGLGKSEQGITTPLMAKKTDRRAGVIVNAS. In terms of domain architecture, RRM spans 283–369; the sequence is RVLLLRNMVG…RTVRATFYDE (87 aa).

In terms of assembly, component of the SWAP1-SFPS-RRC1 splicing factor complex which modulates pre-mRNA splicing to promote photomorphogenesis. Interacts with SWAP1 in a light-independent manner. Associates with the photoreceptor phytochrome B (phyB) in nuclear photobodies upon response to red light. Binds to the splicing factor 1 SF1, involved in 3' splicing site recognition. As to expression, expressed ubiquitously with highest levels in dry seeds and in cells surrounding the base of trichomes and guard cells.

It is found in the nucleus. Its subcellular location is the nucleus speckle. In terms of biological role, as a member of the SWAP1-SFPS-RRC1 splicing factor complex, modulates photomorphogenesis by regulating the gene expression and pre-messenger RNA (mRNA) alternative splicing of a large number of genes, including those involved in plant responses to light signaling, probably by helping in the 3' splice site determination. Associates with and regulates EARLY FLOWERING 3 (ELF3) mRNA processing, a key component of the circadian clock also involved in photomorphogenesis. Required for light-regulated (red, far-red and blue lights) photomorphogenesis in a PHYB- and PHYTOCHROME INTERACTING FACTORS- (PIFs) dependent manner. Promotes flowering under both short (SD) and long days (LD). Controls abscisic acid (ABA) sensitivity during seed development, stomatal responsiveness and germination by monitoring ABI3 splicing, upstream of the splicing factor SUPPRESSOR OF ABI3-ABI5. Seems to be involved in the resistance to UV light and chemical DNA-damaging agents. The protein is DNA-damage-repair/toleration protein 111 of Arabidopsis thaliana (Mouse-ear cress).